A 328-amino-acid polypeptide reads, in one-letter code: Malate dehydrogenase (328 aa).

13-19 contributes to the NAD(+) binding site; sequence GGKGQIA. Residues R94 and R100 each contribute to the substrate site. Residues N107, Q114, and 131–133 contribute to the NAD(+) site; that span reads VGN. Substrate contacts are provided by N133 and R164. The active-site Proton acceptor is H189.

This sequence belongs to the LDH/MDH superfamily. MDH type 2 family.

It carries out the reaction (S)-malate + NAD(+) = oxaloacetate + NADH + H(+). In terms of biological role, catalyzes the reversible oxidation of malate to oxaloacetate. The protein is Malate dehydrogenase of Chlamydia pneumoniae (Chlamydophila pneumoniae).